The sequence spans 245 residues: Carbohydrate deacetylase (245 aa).

His59 and His125 together coordinate Mg(2+).

The protein belongs to the YdjC deacetylase family. As to quaternary structure, homodimer. The cofactor is Mg(2+).

Probably catalyzes the deacetylation of acetylated carbohydrates an important step in the degradation of oligosaccharides. In Listeria welshimeri serovar 6b (strain ATCC 35897 / DSM 20650 / CCUG 15529 / CIP 8149 / NCTC 11857 / SLCC 5334 / V8), this protein is Carbohydrate deacetylase.